The primary structure comprises 236 residues: Uridylate kinase (236 aa).

An ATP-binding site is contributed by 10–13 (KLSG). Gly-52 contacts UMP. 2 residues coordinate ATP: Gly-53 and Arg-57. UMP is bound by residues Asp-72 and 133 to 140 (TGNPFFTT). ATP-binding residues include Thr-160, Tyr-166, and Asp-169.

It belongs to the UMP kinase family. In terms of assembly, homohexamer.

The protein localises to the cytoplasm. The enzyme catalyses UMP + ATP = UDP + ADP. Its pathway is pyrimidine metabolism; CTP biosynthesis via de novo pathway; UDP from UMP (UMPK route): step 1/1. With respect to regulation, inhibited by UTP. Catalyzes the reversible phosphorylation of UMP to UDP. The protein is Uridylate kinase of Ralstonia nicotianae (strain ATCC BAA-1114 / GMI1000) (Ralstonia solanacearum).